Consider the following 512-residue polypeptide: Probable ubiquitin carboxyl-terminal hydrolase 3 (512 aa).

Residues 64-109 (TSKTKESEKSPKSWSAIAKKHVQGDSPVKKSHSVPVPSDRSEKKSF) form a disordered region. The region spanning 133–511 (RGFINTGNIC…VAYLLFYTRR (379 aa)) is the USP domain. The active-site Nucleophile is C142. The active-site Proton acceptor is H453.

Belongs to the peptidase C19 family.

It carries out the reaction Thiol-dependent hydrolysis of ester, thioester, amide, peptide and isopeptide bonds formed by the C-terminal Gly of ubiquitin (a 76-residue protein attached to proteins as an intracellular targeting signal).. The protein is Probable ubiquitin carboxyl-terminal hydrolase 3 (ubp3) of Schizosaccharomyces pombe (strain 972 / ATCC 24843) (Fission yeast).